Here is a 352-residue protein sequence, read N- to C-terminus: Nicotinate-nucleotide--dimethylbenzimidazole phosphoribosyltransferase (352 aa).

Catalysis depends on E318, which acts as the Proton acceptor.

It belongs to the CobT family.

It carries out the reaction 5,6-dimethylbenzimidazole + nicotinate beta-D-ribonucleotide = alpha-ribazole 5'-phosphate + nicotinate + H(+). Its pathway is nucleoside biosynthesis; alpha-ribazole biosynthesis; alpha-ribazole from 5,6-dimethylbenzimidazole: step 1/2. Catalyzes the synthesis of alpha-ribazole-5'-phosphate from nicotinate mononucleotide (NAMN) and 5,6-dimethylbenzimidazole (DMB). The protein is Nicotinate-nucleotide--dimethylbenzimidazole phosphoribosyltransferase of Geobacter sulfurreducens (strain ATCC 51573 / DSM 12127 / PCA).